The sequence spans 311 residues: Homoserine kinase (311 aa).

An ATP-binding site is contributed by 88–98 (PEGLGLGSSGA).

The protein belongs to the GHMP kinase family. Homoserine kinase subfamily.

The protein localises to the cytoplasm. It catalyses the reaction L-homoserine + ATP = O-phospho-L-homoserine + ADP + H(+). The protein operates within amino-acid biosynthesis; L-threonine biosynthesis; L-threonine from L-aspartate: step 4/5. Catalyzes the ATP-dependent phosphorylation of L-homoserine to L-homoserine phosphate. The sequence is that of Homoserine kinase from Saccharolobus islandicus (strain L.S.2.15 / Lassen #1) (Sulfolobus islandicus).